Consider the following 813-residue polypeptide: Lon protease (813 aa).

The Lon N-terminal domain maps to 30-225 (LPILPVRNIV…WLLQLMDKDI (196 aa)). ATP is bound at residue 376–383 (GPPGVGKT). One can recognise a Lon proteolytic domain in the interval 612 to 793 (DDLAGIVTGL…DEVLAIALLK (182 aa)). Catalysis depends on residues S699 and K742.

This sequence belongs to the peptidase S16 family. Homohexamer. Organized in a ring with a central cavity.

It localises to the cytoplasm. The catalysed reaction is Hydrolysis of proteins in presence of ATP.. Its function is as follows. ATP-dependent serine protease that mediates the selective degradation of mutant and abnormal proteins as well as certain short-lived regulatory proteins. Required for cellular homeostasis and for survival from DNA damage and developmental changes induced by stress. Degrades polypeptides processively to yield small peptide fragments that are 5 to 10 amino acids long. Binds to DNA in a double-stranded, site-specific manner. The sequence is that of Lon protease from Cytophaga hutchinsonii (strain ATCC 33406 / DSM 1761 / CIP 103989 / NBRC 15051 / NCIMB 9469 / D465).